Consider the following 298-residue polypeptide: Factor-induced gene 1 protein (298 aa).

4 helical membrane-spanning segments follow: residues 17–37 (IFALAFNLISIFLLIFLLIGC), 163–183 (VLMATVILTILMFLFILYVTV), 195–215 (FLLLLSSTIVLTWGIGAMWTH), and 243–263 (VMAWFSFAFLLLDSVVLWLIF). Ser288 carries the post-translational modification Phosphoserine. Thr293 is subject to Phosphothreonine. Position 296 is a phosphoserine (Ser296).

The protein localises to the membrane. Functionally, required for efficient mating. The sequence is that of Factor-induced gene 1 protein (FIG1) from Saccharomyces cerevisiae (strain ATCC 204508 / S288c) (Baker's yeast).